The sequence spans 323 residues: Zinc finger C2HC domain-containing protein 1A (323 aa).

A C2HC/C3H-type 1 zinc finger spans residues 14–43 (ELLPCKICGRTFFPVALKKHGPICQKTATK). Residues Cys18, Cys21, His33, and Cys37 each contribute to the Zn(2+) site. The segment at 42-81 (TKKRKTFDSSRQRAEGTDIPTVKPLKPRPEPPKKPSNWRR) is disordered. Residues 47–57 (TFDSSRQRAEG) are compositionally biased toward basic and acidic residues. Residues 117-146 (DYIQCPYCQRRFNENAADRHINFCKEQAAR) form a C2HC/C3H-type 2 zinc finger. Residues Cys121, Cys124, His136, and Cys140 each contribute to the Zn(2+) site. Residues 149–258 (NKGKFSTDTK…NPASGVLTSK (110 aa)) form a disordered region. Residues 177–197 (SPGTTSSGSSRLPQPSGTSKT) are compositionally biased toward polar residues. The segment covering 198-214 (VVGAPSGKVSSVSSSSG) has biased composition (low complexity). Ser221 carries the post-translational modification Phosphoserine. Thr242 carries the phosphothreonine modification. Ser290 carries the phosphoserine modification.

The protein belongs to the ZC2HC1 family. Requires Zn(2+) as cofactor.

This Bos taurus (Bovine) protein is Zinc finger C2HC domain-containing protein 1A (ZC2HC1A).